The sequence spans 506 residues: Lysine--tRNA ligase (506 aa).

Glutamate 416 and glutamate 423 together coordinate Mg(2+).

It belongs to the class-II aminoacyl-tRNA synthetase family. As to quaternary structure, homodimer. Requires Mg(2+) as cofactor.

Its subcellular location is the cytoplasm. It catalyses the reaction tRNA(Lys) + L-lysine + ATP = L-lysyl-tRNA(Lys) + AMP + diphosphate. The chain is Lysine--tRNA ligase from Xylella fastidiosa (strain M23).